The primary structure comprises 503 residues: ESX-5 secretion system protein EccD5 (503 aa).

The next 11 membrane-spanning stretches (helical) occupy residues 137–157, 169–189, 200–220, 224–244, 250–270, 272–292, 359–379, 382–402, 413–433, 439–459, and 480–500; these read IVAVQVGASMVATGVVLATGV, LTTIYTAVIGVLVLAVAMLLL, VADIMLMSAIMPVTVAAAAAP, VGSPQAVLGFGVLTVAAALAL, RLGIYTTIVIIGALTMLAALA, MVAATSAVTLLSSLLLICVVA, FLSGLLTGLGVMVVVCMTSLC, HTGQRWLPLILAGFTSGFLLL, SITLAGTAVIIAAAVCVRYAL, LAVSIVAAILVLLPAAGMAAA, and YLCLMPIFPLALWLMNVYAAI.

Belongs to the EccD/Snm4 family. As to quaternary structure, part of the ESX-5 / type VII secretion system (T7SS), which is composed of cytosolic and membrane components. The ESX-5 membrane complex is composed of EccB5, EccC5, EccD5 and EccE5.

It is found in the cell inner membrane. Its function is as follows. Part of the ESX-5 specialized secretion system, which is responsible for the secretion of EsxN and a number of PE_PGRS and PPE proteins, including PPE41. The sequence is that of ESX-5 secretion system protein EccD5 from Mycobacterium tuberculosis (strain CDC 1551 / Oshkosh).